A 329-amino-acid chain; its full sequence is Pantothenate kinase (329 aa).

The disordered stretch occupies residues 1–21 (MISPVPSIPRSAHRQRPEATP). An ATP-binding site is contributed by 107-114 (GSVAVGKS).

Belongs to the prokaryotic pantothenate kinase family.

Its subcellular location is the cytoplasm. It carries out the reaction (R)-pantothenate + ATP = (R)-4'-phosphopantothenate + ADP + H(+). It participates in cofactor biosynthesis; coenzyme A biosynthesis; CoA from (R)-pantothenate: step 1/5. The polypeptide is Pantothenate kinase (coaA) (Streptomyces coelicolor (strain ATCC BAA-471 / A3(2) / M145)).